Reading from the N-terminus, the 423-residue chain is Glucuronoxylanase XynC (423 aa).

The first 33 residues, Met-1–Ala-33, serve as a signal peptide directing secretion. Glu-172 acts as the Proton donor in catalysis. Glu-261 serves as the catalytic Nucleophile.

Belongs to the glycosyl hydrolase 30 family.

It localises to the secreted. The enzyme catalyses Endohydrolysis of (1-&gt;4)-beta-D-xylosyl links in some glucuronoarabinoxylans.. It participates in glycan degradation; xylan degradation. In terms of biological role, catalyzes the depolymerization of methylglucuronoxylan (MeGAXn). It cleaves the beta-1,4-xylosidic bond penultimate to that linking carbon one of the xylose residue substituted with alpha-1,2-linked 4-O-methyl-D-glucuronate (MeGA). The polypeptide is Glucuronoxylanase XynC (xynC) (Bacillus subtilis).